A 152-amino-acid polypeptide reads, in one-letter code: MPAHSLAMSSPALPAFLLCSTLLVIKMYVVAIITGQVRLRKKAFANPEDALRHGGPQYCRSDPDVERCLRAHRNDMETIYPFLFLGFVYSFLGPNPFVAWMHFLVFLLGRVVHTVAYLGKLRAPIRSVTYTLAQLPCASMALQILWEAARHL.

Residues 1 to 12 (MPAHSLAMSSPA) lie on the Lumenal side of the membrane. A helical membrane pass occupies residues 13 to 41 (LPAFLLCSTLLVIKMYVVAIITGQVRLRK). Arginine 38 lines the glutathione pocket. Residues 42-60 (KAFANPEDALRHGGPQYCR) are Cytoplasmic-facing. The chain crosses the membrane as a helical span at residues 61 to 90 (SDPDVERCLRAHRNDMETIYPFLFLGFVYS). 73-77 (RNDME) contributes to the glutathione binding site. Topologically, residues 91 to 95 (FLGPN) are lumenal. Residues 96–119 (PFVAWMHFLVFLLGRVVHTVAYLG) traverse the membrane as a helical segment. Positions 113 and 117 each coordinate glutathione. At 120–123 (KLRA) the chain is on the cytoplasmic side. Residues 124-152 (PIRSVTYTLAQLPCASMALQILWEAARHL) traverse the membrane as a helical segment. 126–130 (RSVTY) contacts glutathione.

This sequence belongs to the MAPEG family. Homotrimer. Requires glutathione as cofactor.

The protein localises to the membrane. The protein resides in the cytoplasm. It is found in the perinuclear region. The enzyme catalyses prostaglandin H2 = prostaglandin E2. It catalyses the reaction 2-glyceryl-prostaglandin H2 = 2-glyceryl-prostaglandin E2. It carries out the reaction prostaglandin G2 = (15S)-15-hydroperoxy-prostaglandin E2. The catalysed reaction is 1-chloro-2,4-dinitrobenzene + glutathione = 2,4-dinitrophenyl-S-glutathione + chloride + H(+). The enzyme catalyses (5S)-hydroperoxy-(6E,8Z,11Z,14Z)-eicosatetraenoate + 2 glutathione = (5S)-hydroxy-(6E,8Z,11Z,14Z)-eicosatetraenoate + glutathione disulfide + H2O. The protein operates within lipid metabolism; prostaglandin biosynthesis. In terms of biological role, terminal enzyme of the cyclooxygenase (COX)-2-mediated prostaglandin E2 (PGE2) biosynthetic pathway. Catalyzes the glutathione-dependent oxidoreduction of prostaglandin endoperoxide H2 (PGH2) to prostaglandin E2 (PGE2) in response to inflammatory stimuli. Plays a key role in inflammation response, fever and pain. Also catalyzes the oxidoreduction of endocannabinoids into prostaglandin glycerol esters and PGG2 into 15-hydroperoxy-PGE2. In addition, displays low glutathione transferase and glutathione-dependent peroxidase activities, toward 1-chloro-2,4-dinitrobenzene and 5-hydroperoxyicosatetraenoic acid (5-HPETE), respectively. This is Prostaglandin E synthase (PTGES) from Macaca fascicularis (Crab-eating macaque).